A 139-amino-acid polypeptide reads, in one-letter code: ATP synthase epsilon chain (139 aa).

The protein belongs to the ATPase epsilon chain family. As to quaternary structure, F-type ATPases have 2 components, CF(1) - the catalytic core - and CF(0) - the membrane proton channel. CF(1) has five subunits: alpha(3), beta(3), gamma(1), delta(1), epsilon(1). CF(0) has three main subunits: a, b and c.

It is found in the cell inner membrane. Its function is as follows. Produces ATP from ADP in the presence of a proton gradient across the membrane. This chain is ATP synthase epsilon chain, found in Salmonella arizonae (strain ATCC BAA-731 / CDC346-86 / RSK2980).